The sequence spans 832 residues: Alpha-glucan phosphorylase, H isozyme (832 aa).

Lys678 bears the N6-(pyridoxal phosphate)lysine mark.

Belongs to the glycogen phosphorylase family. Pyridoxal 5'-phosphate is required as a cofactor.

It is found in the cytoplasm. The enzyme catalyses [(1-&gt;4)-alpha-D-glucosyl](n) + phosphate = [(1-&gt;4)-alpha-D-glucosyl](n-1) + alpha-D-glucose 1-phosphate. Functionally, phosphorylase is an important allosteric enzyme in carbohydrate metabolism. Enzymes from different sources differ in their regulatory mechanisms and in their natural substrates. However, all known phosphorylases share catalytic and structural properties. The polypeptide is Alpha-glucan phosphorylase, H isozyme (Triticum aestivum (Wheat)).